The chain runs to 295 residues: Cytidine deaminase (295 aa).

CMP/dCMP-type deaminase domains are found at residues 48–168 (EDAD…FGPA) and 187–295 (DDDE…YLSL). 89 to 91 (NME) provides a ligand contact to substrate. Position 102 (His102) interacts with Zn(2+). Glu104 acts as the Proton donor in catalysis. Zn(2+)-binding residues include Cys129 and Cys132.

Belongs to the cytidine and deoxycytidylate deaminase family. As to quaternary structure, homodimer. It depends on Zn(2+) as a cofactor.

The enzyme catalyses cytidine + H2O + H(+) = uridine + NH4(+). The catalysed reaction is 2'-deoxycytidine + H2O + H(+) = 2'-deoxyuridine + NH4(+). Its function is as follows. This enzyme scavenges exogenous and endogenous cytidine and 2'-deoxycytidine for UMP synthesis. This chain is Cytidine deaminase, found in Vibrio cholerae serotype O1 (strain ATCC 39315 / El Tor Inaba N16961).